A 308-amino-acid polypeptide reads, in one-letter code: Ribosomal RNA small subunit methyltransferase H (308 aa).

S-adenosyl-L-methionine is bound by residues 34–36 (GGH), D54, F80, D101, and Q108.

Belongs to the methyltransferase superfamily. RsmH family.

It is found in the cytoplasm. It carries out the reaction cytidine(1402) in 16S rRNA + S-adenosyl-L-methionine = N(4)-methylcytidine(1402) in 16S rRNA + S-adenosyl-L-homocysteine + H(+). Functionally, specifically methylates the N4 position of cytidine in position 1402 (C1402) of 16S rRNA. The sequence is that of Ribosomal RNA small subunit methyltransferase H from Ureaplasma parvum serovar 3 (strain ATCC 27815 / 27 / NCTC 11736).